Reading from the N-terminus, the 211-residue chain is Protein-methionine-sulfoxide reductase heme-binding subunit MsrQ (211 aa).

A run of 5 helical transmembrane segments spans residues 17 to 37 (LAGL…GLGA), 82 to 102 (LWCF…ELGV), 116 to 136 (PYLT…FTST), 153 to 173 (FVYL…KIIS), and 178 to 198 (IYAG…LSLF).

Belongs to the MsrQ family. In terms of assembly, heterodimer of a catalytic subunit (MsrP) and a heme-binding subunit (MsrQ). It depends on FMN as a cofactor. Heme b serves as cofactor.

The protein resides in the cell inner membrane. Functionally, part of the MsrPQ system that repairs oxidized periplasmic proteins containing methionine sulfoxide residues (Met-O), using respiratory chain electrons. Thus protects these proteins from oxidative-stress damage caused by reactive species of oxygen and chlorine generated by the host defense mechanisms. MsrPQ is essential for the maintenance of envelope integrity under bleach stress, rescuing a wide series of structurally unrelated periplasmic proteins from methionine oxidation, including the primary periplasmic chaperone SurA and the lipoprotein Pal. MsrQ provides electrons for reduction to the reductase catalytic subunit MsrP, using the quinone pool of the respiratory chain. This is Protein-methionine-sulfoxide reductase heme-binding subunit MsrQ from Shigella boydii serotype 4 (strain Sb227).